The following is a 138-amino-acid chain: Basic phospholipase A2 ammodytoxin B (138 aa).

An N-terminal signal peptide occupies residues 1-16 (MRTLWIVAVCLIGVEG). 7 disulfides stabilise this stretch: C42–C131, C44–C60, C59–C111, C65–C138, C66–C104, C73–C97, and C91–C102. Ca(2+) contacts are provided by Y43, G45, and G47. H63 is an active-site residue. D64 contributes to the Ca(2+) binding site. Residue D105 is part of the active site.

Belongs to the phospholipase A2 family. Group II subfamily. D49 sub-subfamily. Monomer. Binds to calmodulin, coagulation factor X (F10), M-type PLA2 receptor (R-180), 14-3-3 proteins gamma (YWHAG) and epsilon (YWHAE), and R25, a mitochondrial membrane protein. Ca(2+) is required as a cofactor. Expressed by the venom gland.

It is found in the secreted. It localises to the host cytoplasm. The protein localises to the host cytosol. It carries out the reaction a 1,2-diacyl-sn-glycero-3-phosphocholine + H2O = a 1-acyl-sn-glycero-3-phosphocholine + a fatty acid + H(+). Snake venom phospholipase A2 (PLA2) that acts as a presynaptic neurotoxin, an inhibitor of blood coagulation, and has been found to bind with high affinity to intracellular proteins. The response of indirectly stimulated neuromuscular preparations to ammodytoxin (Atx) is triphasic. The first phase, the transient inhibition of the acetylcholine (ACh) release, starts soon after the addition of Atx and lasts for several minutes. This phase is probably independent of Atx enzymatic activity. The effect may be due to the specific binding of the toxin to presynaptic receptors. These receptors, called N-type receptors, are still unidentified. It is noteworthy that a neuronal isoform of the M-type PLA2 receptor (R180) has been identified as a high-affinity receptor for Atx in neuronal plasma membranes. It was demonstrated however that this receptor is not essential for expression of neurotoxicity by Atx. The second phase corresponds to an augmentation of neurotransmitter release. A peak is reached 10-20 minutes after exposure of the preparation to Atx and is followed by a gradual reduction. In this phase, the enzymatic activity of Atx of the mammalian is not significant. It is speculated that the increased release of neurotransmitter in this phase is induced by the interference of Atx with voltage-gated potassium channels. Measurements of ionic currents showed however that voltage-gated potassium channels are not affected by Atx. The third phase of the response of neuromuscular preparations to Atx, which corresponds to a complete and irreversible paralysis, is clearly dependent on the hydrolytic activity of the toxin. In addition to its presynaptic neurotoxicity, Atx shows an anticoagulant activity by binding with high affinity to activated coagulation factor X (F10) thus inhibiting the formation of the prothrombinase complex (FX/FV) and its activity (IC(50) is 82 nM). Surprisingly, Atx was discovered to bind intracellular proteins such as calmodulin (CaM), 14-3-3 proteins gamma (YWHAG) and epsilon (YWHAE) (by similarity with AtxC), as well as R25 (by similarity with AtxC), a mitochondrial integral membrane protein found in cerebral cortex. These findings raised a doubt about the dogma of the exclusively extracellular action of PLA2s, defended by the potential instability of these molecules in the reducing environment of the eukaryotic cytosol coupled with their possible inability to act as enzymes in this cellular compartment, due to too low concentration of calcium ions. This hypothesis was challenged efficiently by demonstrating the internalization of AtxA into a culture cells, but still remains to be directly demonstrated in vivo. PLA2 catalyzes the calcium-dependent hydrolysis of the 2-acyl groups in 3-sn-phosphoglycerides. The polypeptide is Basic phospholipase A2 ammodytoxin B (Vipera ammodytes ammodytes (Western sand viper)).